We begin with the raw amino-acid sequence, 266 residues long: MSEAESTPVEEPVVESTEGSEAIPEVEQSTPLVSGLTLEHCGGRYRLTLPSDLDWIDLWPQLQLYLVGQEHLWSETLPVDCACGQRLLDQSQLQQLAEALSEHQLRLDRIITGRRQTAIAAATLGYSVQQEELPPLLVKEADGPSQATANPLYLKTTLRSGIEIHHDASVIIVGDVNAGASIIAAGDIIVWGRLRGVAHAGAKGNLGARIMTLEMAATQLRIADLLARTPDPPRPPYPEVAYATDQGIQIAPAYTWGRVFAVSAAP.

Residues 1–21 (MSEAESTPVEEPVVESTEGSE) are compositionally biased toward low complexity. Residues 1–28 (MSEAESTPVEEPVVESTEGSEAIPEVEQ) are disordered.

It belongs to the MinC family. Interacts with MinD and FtsZ.

In terms of biological role, cell division inhibitor that blocks the formation of polar Z ring septums. Rapidly oscillates between the poles of the cell to destabilize FtsZ filaments that have formed before they mature into polar Z rings. Prevents FtsZ polymerization. This is Probable septum site-determining protein MinC from Thermosynechococcus vestitus (strain NIES-2133 / IAM M-273 / BP-1).